We begin with the raw amino-acid sequence, 146 residues long: Hemoglobin subunit beta-1 (146 aa).

The 145-residue stretch at 2–146 (EWTDKERAII…VVSALGKQYH (145 aa)) folds into the Globin domain. Residues His-63 and His-92 each coordinate heme b.

The protein belongs to the globin family. In terms of assembly, hb 1 is a heterotetramer of two alpha-1 and two beta-1 chains. In terms of tissue distribution, red blood cells.

Involved in oxygen transport from gills to the various peripheral tissues. In Gobionotothen gibberifrons (Humped rockcod), this protein is Hemoglobin subunit beta-1 (hbb1).